Here is a 268-residue protein sequence, read N- to C-terminus: Hydroxyethylthiazole kinase (268 aa).

M45 contacts substrate. Residues R121 and T167 each coordinate ATP. G194 contacts substrate.

It belongs to the Thz kinase family. Mg(2+) serves as cofactor.

The catalysed reaction is 5-(2-hydroxyethyl)-4-methylthiazole + ATP = 4-methyl-5-(2-phosphooxyethyl)-thiazole + ADP + H(+). The protein operates within cofactor biosynthesis; thiamine diphosphate biosynthesis; 4-methyl-5-(2-phosphoethyl)-thiazole from 5-(2-hydroxyethyl)-4-methylthiazole: step 1/1. Functionally, catalyzes the phosphorylation of the hydroxyl group of 4-methyl-5-beta-hydroxyethylthiazole (THZ). The sequence is that of Hydroxyethylthiazole kinase from Bacillus cereus (strain ATCC 10987 / NRS 248).